The primary structure comprises 504 residues: Signal transduction histidine-protein kinase/phosphatase MprB (504 aa).

The Cytoplasmic portion of the chain corresponds to 1–26 (MWWFRRRDRAPLRATSSLSLRWRVML). The helical transmembrane segment at 27-47 (LAMSMVAMVVVLMSFAVYAVI) threads the bilayer. At 48-163 (SAALYSDIDN…PTEAVMNKLR (116 aa)) the chain is on the extracellular side. Residues 164–184 (WVLLIVGGIGVAVAAVAGGMV) traverse the membrane as a helical segment. At 185–504 (TRAGLRPVGR…SVESQSTRAT (320 aa)) the chain is on the cytoplasmic side. One can recognise an HAMP domain in the interval 186-238 (RAGLRPVGRLTEAAERVARTDDLRPIPVFGSDELARLTEAFNLMLRALAESRE). A Histidine kinase domain is found at 246 to 466 (DAGHELRTPL…SIYVLLPGRR (221 aa)). H249 carries the post-translational modification Phosphohistidine; by autocatalysis. Residues 471 to 504 (QLPGATAGARSTDIENSRGSANVISVESQSTRAT) are disordered. Residues 487–504 (SRGSANVISVESQSTRAT) show a composition bias toward polar residues.

Requires Mg(2+) as cofactor. The cofactor is Mn(2+). Autophosphorylated.

It localises to the cell membrane. The enzyme catalyses ATP + protein L-histidine = ADP + protein N-phospho-L-histidine.. In terms of biological role, member of the two-component regulatory system MprB/MprA which contributes to maintaining a balance among several systems involved in stress resistance and is required for establishment and maintenance of persistent infection in the host. In response to environmental signals MprB acts both as a membrane-associated protein kinase that undergoes autophosphorylation and subsequently transfers the phosphate to MprA, and a protein phosphatase that dephosphorylates phospho-MprA. This is Signal transduction histidine-protein kinase/phosphatase MprB (mprB) from Mycobacterium tuberculosis (strain ATCC 25177 / H37Ra).